The chain runs to 509 residues: Maturase K (509 aa).

The protein belongs to the intron maturase 2 family. MatK subfamily.

It is found in the plastid. It localises to the chloroplast. Usually encoded in the trnK tRNA gene intron. Probably assists in splicing its own and other chloroplast group II introns. The polypeptide is Maturase K (Nicotiana clevelandii (Wild tobacco)).